Consider the following 182-residue polypeptide: Large ribosomal subunit protein uL6 (182 aa).

Belongs to the universal ribosomal protein uL6 family. Part of the 50S ribosomal subunit.

Its function is as follows. This protein binds to the 23S rRNA, and is important in its secondary structure. It is located near the subunit interface in the base of the L7/L12 stalk, and near the tRNA binding site of the peptidyltransferase center. This Dehalococcoides mccartyi (strain ATCC BAA-2266 / KCTC 15142 / 195) (Dehalococcoides ethenogenes (strain 195)) protein is Large ribosomal subunit protein uL6.